Reading from the N-terminus, the 643-residue chain is MHLGDLKHPNELHGLSPAQLEDVARQIRERHLQVVSTSGGHLGPGLGVVELTLALYQTLDLDQDRVIWDVGHQAYPHKLITGRFNDFDSLRQQHGVAGYLKRTESDFDHFGAGHASTSISAALGMAMARDNHGESFKCVAVIGDGALTGGMALEAINHAGHLPNTRLLVVLNDNDMSISPPVGALSNVLNRARLSPPMQFLSGSVEESVRHLPFMGGEIPAELNRLKGSMRRLAVPKVGAVFEELGFTYMGPIDGHDIGEMVRTFQAAHREGGPVLVHVVTKKGKGYPYAEADQVGYHAQSAFDLGTGKAIPSSKPKPPSYSKVFGQTLVKLCEQNSRVIGITAAMATGTGLDLLQKAVPDQYVDVGIAEQHAVTLAAGMACEGLRPVVAIYSTFLQRAYDQLIHDVGIQKLPVTFVLDRAGIVGADGPTHQGQYDISYMRAIPNFTVMAPKDEAELQRMLVTCLQHDGPTALRIPRGSGEGVPLMEEGWETLPIGRGELLREGDDLMIVAYGSMVAPALATATLLEEAGLSTTVINARFLRPLDQALIHPLARRIPRVVTMEEGALPGGFGAAVLESLTDQDINVSMLRIGIPDKLVDHATPQQSKEALGLTPAQMAERILERFSNTSGDLPASASIKALQA.

Thiamine diphosphate is bound by residues histidine 72 and 113–115 (GHA). Aspartate 144 contributes to the Mg(2+) binding site. Thiamine diphosphate contacts are provided by residues 145 to 146 (GA), asparagine 174, tyrosine 287, and glutamate 370. A Mg(2+)-binding site is contributed by asparagine 174.

It belongs to the transketolase family. DXPS subfamily. As to quaternary structure, homodimer. Requires Mg(2+) as cofactor. It depends on thiamine diphosphate as a cofactor.

It catalyses the reaction D-glyceraldehyde 3-phosphate + pyruvate + H(+) = 1-deoxy-D-xylulose 5-phosphate + CO2. The protein operates within metabolic intermediate biosynthesis; 1-deoxy-D-xylulose 5-phosphate biosynthesis; 1-deoxy-D-xylulose 5-phosphate from D-glyceraldehyde 3-phosphate and pyruvate: step 1/1. In terms of biological role, catalyzes the acyloin condensation reaction between C atoms 2 and 3 of pyruvate and glyceraldehyde 3-phosphate to yield 1-deoxy-D-xylulose-5-phosphate (DXP). The sequence is that of 1-deoxy-D-xylulose-5-phosphate synthase from Synechococcus sp. (strain CC9605).